Here is a 319-residue protein sequence, read N- to C-terminus: Annexin A4 (319 aa).

Ala-2 carries the N-acetylalanine modification. Thr-7 bears the Phosphothreonine mark. Ser-12 carries the post-translational modification Phosphoserine. 4 Annexin repeats span residues 14–85, 86–157, 169–241, and 245–316; these read FNAA…GMMT, PTVL…SLSA, ALMR…AIVK, and NKSA…ILCG. 3 positions are modified to N6-acetyllysine: Lys-213, Lys-293, and Lys-300.

The protein belongs to the annexin family. Monomer. Binds to SFTPA1 in a Ca(2+)-dependent manner.

It localises to the zymogen granule membrane. Its function is as follows. May play a role in alveolar type II cells through interaction with the surfactant protein SFTPA1 (SP-A). The polypeptide is Annexin A4 (ANXA4) (Bos taurus (Bovine)).